The chain runs to 261 residues: uncharacterized protein (261 aa).

An HTH tetR-type domain is found at 15 to 75 (SINPEDIISG…AMTDRALSKY (61 aa)). Residues 38-57 (SMPLLGKHLGVGVTSIYWYF) constitute a DNA-binding region (H-T-H motif). The disordered stretch occupies residues 234–261 (AAGEVAVRRPTATADAPTPGARAKAVAR). The span at 241–261 (RRPTATADAPTPGARAKAVAR) shows a compositional bias: low complexity.

This is an uncharacterized protein from Mycobacterium bovis (strain ATCC BAA-935 / AF2122/97).